We begin with the raw amino-acid sequence, 612 residues long: Dihydroxy-acid dehydratase (612 aa).

Residue Asp-81 participates in Mg(2+) binding. Position 122 (Cys-122) interacts with [2Fe-2S] cluster. 2 residues coordinate Mg(2+): Asp-123 and Lys-124. Lys-124 bears the N6-carboxylysine mark. Cys-193 serves as a coordination point for [2Fe-2S] cluster. Mg(2+) is bound at residue Glu-489. The active-site Proton acceptor is the Ser-515.

The protein belongs to the IlvD/Edd family. In terms of assembly, homodimer. [2Fe-2S] cluster serves as cofactor. Mg(2+) is required as a cofactor.

It carries out the reaction (2R)-2,3-dihydroxy-3-methylbutanoate = 3-methyl-2-oxobutanoate + H2O. It catalyses the reaction (2R,3R)-2,3-dihydroxy-3-methylpentanoate = (S)-3-methyl-2-oxopentanoate + H2O. It functions in the pathway amino-acid biosynthesis; L-isoleucine biosynthesis; L-isoleucine from 2-oxobutanoate: step 3/4. Its pathway is amino-acid biosynthesis; L-valine biosynthesis; L-valine from pyruvate: step 3/4. In terms of biological role, functions in the biosynthesis of branched-chain amino acids. Catalyzes the dehydration of (2R,3R)-2,3-dihydroxy-3-methylpentanoate (2,3-dihydroxy-3-methylvalerate) into 2-oxo-3-methylpentanoate (2-oxo-3-methylvalerate) and of (2R)-2,3-dihydroxy-3-methylbutanoate (2,3-dihydroxyisovalerate) into 2-oxo-3-methylbutanoate (2-oxoisovalerate), the penultimate precursor to L-isoleucine and L-valine, respectively. The polypeptide is Dihydroxy-acid dehydratase (Xanthomonas campestris pv. campestris (strain B100)).